The following is a 1375-amino-acid chain: Ubiquitin carboxyl-terminal hydrolase 47 (1375 aa).

Lys122 carries the post-translational modification N6-acetyllysine. The region spanning Val188–Lys564 is the USP domain. Catalysis depends on Cys197, which acts as the Nucleophile. The tract at residues Asp425 to Asn452 is disordered. A compositionally biased stretch (polar residues) spans Gln430 to Asn452. His503 functions as the Proton acceptor in the catalytic mechanism. The residue at position 832 (Ser832) is a Phosphoserine. Disordered stretches follow at residues Thr840–Val859, Leu880–Ser968, and Asn983–Lys1024. Over residues Ser882–Ser899 the composition is skewed to low complexity. Ser910 carries the post-translational modification Phosphoserine. Residues Leu912 to Gln928 show a composition bias toward basic and acidic residues. A compositionally biased stretch (polar residues) spans His929 to Phe938. Position 933 is a phosphoserine (Ser933). The segment covering Ser940–Asn950 has biased composition (basic and acidic residues). Residues Ser953 to Ser968 show a composition bias toward low complexity. Residues Lys997–Trp1006 are compositionally biased toward basic and acidic residues. Acidic residues predominate over residues Asp1007–Asp1020. A Phosphoserine modification is found at Ser1013. Thr1015 carries the phosphothreonine modification. Position 1017 is a phosphoserine (Ser1017).

It belongs to the peptidase C19 family. As to quaternary structure, interacts with BTRC and FBXW11. Interacts with POLB. Expressed in skeletal muscle, heart and testis.

Its subcellular location is the cytoplasm. The catalysed reaction is Thiol-dependent hydrolysis of ester, thioester, amide, peptide and isopeptide bonds formed by the C-terminal Gly of ubiquitin (a 76-residue protein attached to proteins as an intracellular targeting signal).. Its function is as follows. Ubiquitin-specific protease that specifically deubiquitinates monoubiquitinated DNA polymerase beta (POLB), stabilizing POLB thereby playing a role in base-excision repair (BER). Acts as a regulator of cell growth and genome integrity. May also indirectly regulate CDC25A expression at a transcriptional level. This Homo sapiens (Human) protein is Ubiquitin carboxyl-terminal hydrolase 47 (USP47).